The following is a 190-amino-acid chain: Cancer-related nucleoside-triphosphatase (190 aa).

Residue Ala-2 is modified to N-acetylalanine. Residues 9–16 (GPPGVGKT) and 109–116 (VCVIDEIG) contribute to the ATP site. Position 165 is an N6-acetyllysine (Lys-165).

The protein belongs to the THEP1 NTPase family. As to quaternary structure, monomer.

It carries out the reaction a ribonucleoside 5'-triphosphate + H2O = a ribonucleoside 5'-diphosphate + phosphate + H(+). The enzyme catalyses 5-methyl-UTP + H2O = 5-methyl-UDP + phosphate + H(+). It catalyses the reaction CTP + H2O = CDP + phosphate + H(+). The catalysed reaction is ATP + H2O = ADP + phosphate + H(+). It carries out the reaction GTP + H2O = GDP + phosphate + H(+). Has nucleotide phosphatase activity towards ATP, GTP, CTP, TTP and UTP. Hydrolyzes nucleoside diphosphates with lower efficiency. This Homo sapiens (Human) protein is Cancer-related nucleoside-triphosphatase.